Consider the following 471-residue polypeptide: Coagulation factor IX (471 aa).

An N-terminal signal peptide occupies residues Met-1–Cys-28. The propeptide occupies Ala-29 to Arg-46. Positions 47, 48, 53, 54, 61, 63, 66, 67, 72, 73, and 76 each coordinate Ca(2+). Residues Tyr-47 to Val-92 enclose the Gla domain. 4-carboxyglutamate occurs at positions 53, 54, 61, 63, 66, 67, 72, 73, 76, 79, and 82. Mg(2+) is bound at residue Glu-61. A disulfide bond links Cys-64 and Cys-69. Glu-66 contacts Mg(2+). Glu-72 contributes to the Mg(2+) binding site. Glu-76 serves as a coordination point for Mg(2+). Position 82 (Glu-82) interacts with Ca(2+). Residue Glu-82 coordinates Mg(2+). O-linked (GalNAc...) threonine glycosylation is present at Thr-85. The Ca(2+) site is built by Glu-86, Asp-93, Gly-94, and Gln-96. Glu-86 is subject to 4-carboxyglutamate. A Mg(2+)-binding site is contributed by Glu-86. One can recognise an EGF-like 1; calcium-binding domain in the interval Asp-93–Glu-129. 10 disulfide bridges follow: Cys-97/Cys-108, Cys-102/Cys-117, Cys-119/Cys-128, Cys-134/Cys-145, Cys-141/Cys-155, Cys-157/Cys-170, Cys-178/Cys-345, Cys-262/Cys-278, Cys-392/Cys-406, and Cys-417/Cys-445. The O-linked (Glc...) serine glycan is linked to Ser-99. Ca(2+) is bound by residues Asp-110 and Asp-111. Residue Asp-110 is modified to (3R)-3-hydroxyaspartate. Ser-114 carries the post-translational modification Phosphoserine. The region spanning Leu-130 to Glu-171 is the EGF-like 2 domain. A propeptide spans Ala-193–Arg-236 (activation peptide). Tyr-202 is modified (sulfotyrosine). Residue Asn-204 is glycosylated (N-linked (GlcNAc...) asparagine). Ser-205 is modified (phosphoserine). Thr-206 is subject to Phosphothreonine; alternate. Thr-206 carries an O-linked (GalNAc...) threonine; alternate glycan. Asn-223 is a glycosylation site (N-linked (GlcNAc...) asparagine). 2 O-linked (GalNAc...) threonine glycosylation sites follow: Thr-225 and Thr-235. In terms of domain architecture, Peptidase S1 spans Val-237–Lys-469. The Charge relay system role is filled by His-277. The Ca(2+) site is built by Glu-291, Asn-293, Glu-298, and Glu-301. Catalysis depends on Asp-325, which acts as the Charge relay system. Residue Ser-421 is the Charge relay system of the active site.

The protein belongs to the peptidase S1 family. As to quaternary structure, heterodimer of a light chain and a heavy chain; disulfide-linked. Interacts (inactive and activated) with F11 (activated) in calcium-dependent manner. Interacts with SERPINC1. Activated by factor XIa, which excises the activation peptide. The propeptide can also be removed by snake venom protease. Activated by coagulation factor VIIa-tissue factor (F7-F3) complex in calcium-dependent manner. Post-translationally, the iron and 2-oxoglutarate dependent 3-hydroxylation of aspartate and asparagine is (R) stereospecific within EGF domains. In terms of processing, predominantly O-glucosylated at Ser-99 by POGLUT1 in vitro. In terms of tissue distribution, detected in liver.

It is found in the secreted. It catalyses the reaction Selective cleavage of Arg-|-Ile bond in factor X to form factor Xa.. In terms of biological role, factor IX is a vitamin K-dependent plasma protein that participates in the intrinsic pathway of blood coagulation by converting factor X to its active form in the presence of Ca(2+) ions, phospholipids, and factor VIIIa. In Mus musculus (Mouse), this protein is Coagulation factor IX (F9).